A 274-amino-acid chain; its full sequence is NADH-ubiquinone oxidoreductase chain 2 (274 aa).

Transmembrane regions (helical) follow at residues 28–48 (MIIMSALLLKSGAAPFHFWFP), 54–74 (LTWMNALVLMTWQKIAPLMLI), 79–99 (IKYLLLISVILSVIIGAIGGL), 107–127 (LMAFSSINHLGWMLSSLMISE), 128–148 (SIWLIYFFFYSFLSFVLTFMF), 171–191 (FTLFMNFLSLGGLPPFLGFLP), 206–226 (FLLLLMMMSTLITLFFYLRIC), and 254–274 (LIMTFFSIFGLFMISLFYFMF).

This sequence belongs to the complex I subunit 2 family.

The protein resides in the mitochondrion inner membrane. The enzyme catalyses a ubiquinone + NADH + 5 H(+)(in) = a ubiquinol + NAD(+) + 4 H(+)(out). Its function is as follows. Core subunit of the mitochondrial membrane respiratory chain NADH dehydrogenase (Complex I) that is believed to belong to the minimal assembly required for catalysis. Complex I functions in the transfer of electrons from NADH to the respiratory chain. The immediate electron acceptor for the enzyme is believed to be ubiquinone. The chain is NADH-ubiquinone oxidoreductase chain 2 (mt:ND2) from Drosophila mauritiana (Fruit fly).